The primary structure comprises 244 residues: Small ribosomal subunit protein eS4 (244 aa).

One can recognise an S4 RNA-binding domain in the interval 43 to 108 (LPLLLIVRDI…NYRVLFDRKG (66 aa)).

The protein belongs to the eukaryotic ribosomal protein eS4 family.

The polypeptide is Small ribosomal subunit protein eS4 (rps4e) (Methanocaldococcus jannaschii (strain ATCC 43067 / DSM 2661 / JAL-1 / JCM 10045 / NBRC 100440) (Methanococcus jannaschii)).